The following is a 502-amino-acid chain: ATP synthase subunit alpha (502 aa).

Residue 169–176 coordinates ATP; that stretch reads GDRQTGKT.

Belongs to the ATPase alpha/beta chains family. F-type ATPases have 2 components, CF(1) - the catalytic core - and CF(0) - the membrane proton channel. CF(1) has five subunits: alpha(3), beta(3), gamma(1), delta(1), epsilon(1). CF(0) has three main subunits: a(1), b(2) and c(9-12). The alpha and beta chains form an alternating ring which encloses part of the gamma chain. CF(1) is attached to CF(0) by a central stalk formed by the gamma and epsilon chains, while a peripheral stalk is formed by the delta and b chains.

The protein resides in the cell inner membrane. It catalyses the reaction ATP + H2O + 4 H(+)(in) = ADP + phosphate + 5 H(+)(out). In terms of biological role, produces ATP from ADP in the presence of a proton gradient across the membrane. The alpha chain is a regulatory subunit. The polypeptide is ATP synthase subunit alpha (Thermodesulfovibrio yellowstonii (strain ATCC 51303 / DSM 11347 / YP87)).